The following is a 577-amino-acid chain: Aspartate--tRNA(Asp/Asn) ligase (577 aa).

E171 provides a ligand contact to L-aspartate. Residues 195-198 are aspartate; it reads QLFK. R217 contributes to the L-aspartate binding site. ATP contacts are provided by residues 217–219 and Q226; that span reads RDE. H444 serves as a coordination point for L-aspartate. E474 provides a ligand contact to ATP. R481 contributes to the L-aspartate binding site. 526 to 529 lines the ATP pocket; that stretch reads GFDR.

It belongs to the class-II aminoacyl-tRNA synthetase family. Type 1 subfamily. As to quaternary structure, homodimer.

Its subcellular location is the cytoplasm. The catalysed reaction is tRNA(Asx) + L-aspartate + ATP = L-aspartyl-tRNA(Asx) + AMP + diphosphate. Its function is as follows. Aspartyl-tRNA synthetase with relaxed tRNA specificity since it is able to aspartylate not only its cognate tRNA(Asp) but also tRNA(Asn). Is 1.7 times more efficient at aminoacylating tRNA(Asp) over tRNA(Asn). Reaction proceeds in two steps: L-aspartate is first activated by ATP to form Asp-AMP and then transferred to the acceptor end of tRNA(Asp/Asn). The chain is Aspartate--tRNA(Asp/Asn) ligase from Helicobacter pylori (strain ATCC 700392 / 26695) (Campylobacter pylori).